The primary structure comprises 1728 residues: U3 small nucleolar RNA-associated protein 10 (1728 aa).

HEAT repeat units lie at residues 540-578 (DKDF…LVKE), 881-926 (PANH…MMPA), 986-1024 (FMGS…AYEH), 1191-1229 (LLSI…SEST), 1235-1274 (REAL…KYGK), 1622-1662 (ADAT…GQAA), and 1683-1721 (LQAL…KLGE).

Belongs to the HEATR1/UTP10 family. As to quaternary structure, component of the ribosomal small subunit (SSU) processome.

The protein localises to the nucleus. Its subcellular location is the nucleolus. In terms of biological role, involved in nucleolar processing of pre-18S ribosomal RNA. Involved in ribosome biosynthesis. This is U3 small nucleolar RNA-associated protein 10 from Chaetomium globosum (strain ATCC 6205 / CBS 148.51 / DSM 1962 / NBRC 6347 / NRRL 1970) (Soil fungus).